Here is a 75-residue protein sequence, read N- to C-terminus: UPF0346 protein LJ_1103 (75 aa).

The protein belongs to the UPF0346 family.

In Lactobacillus johnsonii (strain CNCM I-12250 / La1 / NCC 533), this protein is UPF0346 protein LJ_1103.